A 242-amino-acid chain; its full sequence is Agamous-like MADS-box protein AGL8 (242 aa).

Residues 3–57 (RGRVQLKRIENKINRQVTFSKRRSGLLKKAHEISVLCDAEVALIVFSSKGKLFEY) form the MADS-box domain. Residues 88 to 178 (SENWVLEHAK…LKKIKEREKK (91 aa)) enclose the K-box domain. The stretch at 89–178 (ENWVLEHAKL…LKKIKEREKK (90 aa)) forms a coiled coil.

Homodimer capable of binding to CArG-box sequences. Vascular tissue of cauline leaves, floral shoot apex and valves of carpels and fruits.

It is found in the nucleus. Functionally, probable transcription factor that promotes early floral meristem identity in synergy with APETALA1 and CAULIFLOWER. Is required subsequently for the transition of an inflorescence meristem into a floral meristem. Seems to be partially redundant to the function of APETALA1 and CAULIFLOWER in the up-regulation of LEAFY. Is also required for normal pattern of cell division, expansion and differentiation during morphogenesis of the silique. Probably not required for fruit elongation but instead is required to prevent ectopic activity of IND. Represses SAUR10 expression in stems and inflorescence branches. The sequence is that of Agamous-like MADS-box protein AGL8 (AGL8) from Arabidopsis thaliana (Mouse-ear cress).